The chain runs to 295 residues: Elongation factor Ts (295 aa).

The tract at residues 79 to 82 (TDFV) is involved in Mg(2+) ion dislocation from EF-Tu.

This sequence belongs to the EF-Ts family.

The protein localises to the cytoplasm. In terms of biological role, associates with the EF-Tu.GDP complex and induces the exchange of GDP to GTP. It remains bound to the aminoacyl-tRNA.EF-Tu.GTP complex up to the GTP hydrolysis stage on the ribosome. This Bacillus cereus (strain G9842) protein is Elongation factor Ts.